The chain runs to 82 residues: Small ribosomal subunit protein bS16 (82 aa).

Belongs to the bacterial ribosomal protein bS16 family.

The sequence is that of Small ribosomal subunit protein bS16 from Shewanella sp. (strain MR-4).